Here is a 695-residue protein sequence, read N- to C-terminus: MSLVPKAGYPFIIYFLDNINKYISDKTIQTYLTAFQINVDNLKVINKQFIPEAYRIIKLFTTNTTIMFAIYNYIFHGISKIGFLEKFSEEQIKYITDLETTDTKLIACAGSGKTRSVIGRIKFMVEHGLADKDEIYAITFSKHAATDFHRRIRELFPDYENFCQLKNFSTIDSMAKSILCRVKHHRSENVEILSIALRNFLKEATDEEINSITKFKIIKHLFIDEAQDLNNIQFDIALMFKKHFGTTIHLCGDPNQNIYQFRRSSNSYLMEFPAKKFELTLNFRSTQEIIDFSECLKPIATTRSVSGTNKIGPKVTIMTKQAIQIHKLILYFLKQYEKKNDLSNIAIICPTRGTGVNANTGLAMIFNFLKSNHIKVNQLYCESSSDERKRLVDRIPGHINLLTYHGTKGLEFDTVFVMDFYHSLLNIEPTYEEHNINQYLLYVATSRAISKMFICTYINNYGGYLNHWITKVDPKYYLIDSQPKIHKLTFRNEEIFDSNGVTELLEKLSEEDLYSIYELIKVNTFYEKRIFPDHTDIDRGKDEALYGIFCEELFYLCYYLNKKLEPRRFELIEKIVKSKFIIVENDLECNILKKFINTNNLTWTQFDQNKNNFRKDVIKLVEKYFSRNVELNDSIICTNDFINIVEANKIDIRDTYNRYLQPDKYQYNYNNIIFDLFYLVVVQYAYDINHYIYIK.

The region spanning 86 to 499 is the UvrD-like helicase ATP-binding domain; sequence KFSEEQIKYI…FRNEEIFDSN (414 aa). Residue 107-114 participates in ATP binding; that stretch reads ACAGSGKT.

Belongs to the helicase family. UvrD subfamily.

It carries out the reaction Couples ATP hydrolysis with the unwinding of duplex DNA by translocating in the 3'-5' direction.. The enzyme catalyses ATP + H2O = ADP + phosphate + H(+). ATP-dependent DNA helicase. In Acanthamoeba polyphaga mimivirus (APMV), this protein is Putative ATP-dependent DNA helicase R568.